A 549-amino-acid polypeptide reads, in one-letter code: Glucose-6-phosphate isomerase (549 aa).

Glu355 (proton donor) is an active-site residue. Residues His386 and Lys514 contribute to the active site.

This sequence belongs to the GPI family.

It is found in the cytoplasm. The enzyme catalyses alpha-D-glucose 6-phosphate = beta-D-fructose 6-phosphate. Its pathway is carbohydrate biosynthesis; gluconeogenesis. It participates in carbohydrate degradation; glycolysis; D-glyceraldehyde 3-phosphate and glycerone phosphate from D-glucose: step 2/4. Its function is as follows. Catalyzes the reversible isomerization of glucose-6-phosphate to fructose-6-phosphate. This is Glucose-6-phosphate isomerase from Salmonella paratyphi A (strain AKU_12601).